The following is a 229-amino-acid chain: 7-cyano-7-deazaguanine synthase (229 aa).

15-25 (LSGGLDSATVV) contacts ATP. Positions 194, 204, 207, and 210 each coordinate Zn(2+).

Belongs to the QueC family. It depends on Zn(2+) as a cofactor.

The enzyme catalyses 7-carboxy-7-deazaguanine + NH4(+) + ATP = 7-cyano-7-deazaguanine + ADP + phosphate + H2O + H(+). It functions in the pathway purine metabolism; 7-cyano-7-deazaguanine biosynthesis. Its function is as follows. Catalyzes the ATP-dependent conversion of 7-carboxy-7-deazaguanine (CDG) to 7-cyano-7-deazaguanine (preQ(0)). The chain is 7-cyano-7-deazaguanine synthase from Pseudomonas syringae pv. syringae (strain B728a).